The chain runs to 87 residues: Large ribosomal subunit protein bL31B-2/bL31B-3 (87 aa).

Belongs to the bacterial ribosomal protein bL31 family. Type B subfamily. Part of the 50S ribosomal subunit.

This Escherichia coli O157:H7 protein is Large ribosomal subunit protein bL31B-2/bL31B-3 (rpmE2-2).